Reading from the N-terminus, the 902-residue chain is 3'-5' exonuclease DinG (902 aa).

Residues 8–161 (VVDLETTGNQ…DEDATTTAKL (154 aa)) form the Exonuclease domain. Residues 241-496 (KNVTQSLNLT…KAVDKLEQQR (256 aa)) enclose the Helicase ATP-binding domain. Position 276 to 283 (276 to 283 (APLGSGKS)) interacts with ATP. A DEAH box motif is present at residues 448–451 (DEAH). A Helicase C-terminal domain is found at 714 to 883 (YIVEYITVTQ…HFKQRKGNIK (170 aa)).

It belongs to the helicase family. DinG subfamily. Type 2 sub-subfamily.

3'-5' exonuclease. In Staphylococcus epidermidis (strain ATCC 35984 / DSM 28319 / BCRC 17069 / CCUG 31568 / BM 3577 / RP62A), this protein is 3'-5' exonuclease DinG.